The sequence spans 515 residues: Maturase K (515 aa).

Belongs to the intron maturase 2 family. MatK subfamily.

It localises to the plastid. It is found in the chloroplast. Functionally, usually encoded in the trnK tRNA gene intron. Probably assists in splicing its own and other chloroplast group II introns. In Pinus koraiensis (Korean pine), this protein is Maturase K.